The chain runs to 275 residues: uncharacterized protein (275 aa).

Residues 20 to 22, 41 to 42, 80 to 81, and Asn107 each bind NAD(+); these read RGQ, DI, and DV. Residue Ser160 participates in substrate binding. The active-site Proton acceptor is the Tyr173. NAD(+)-binding positions include Lys177 and 206–208; that span reads VET.

Belongs to the short-chain dehydrogenases/reductases (SDR) family.

This is an uncharacterized protein from Mycolicibacterium paratuberculosis (strain ATCC BAA-968 / K-10) (Mycobacterium paratuberculosis).